We begin with the raw amino-acid sequence, 91 residues long: Large ribosomal subunit protein bL31B (91 aa).

The protein belongs to the bacterial ribosomal protein bL31 family. Type B subfamily. Part of the 50S ribosomal subunit.

The polypeptide is Large ribosomal subunit protein bL31B (Neisseria meningitidis serogroup B (strain ATCC BAA-335 / MC58)).